Here is a 68-residue protein sequence, read N- to C-terminus: Large ribosomal subunit protein uL29 (68 aa).

This sequence belongs to the universal ribosomal protein uL29 family.

This chain is Large ribosomal subunit protein uL29, found in Methanobrevibacter smithii (strain ATCC 35061 / DSM 861 / OCM 144 / PS).